A 300-amino-acid chain; its full sequence is 3-methyl-2-oxobutanoate hydroxymethyltransferase (300 aa).

Mg(2+)-binding residues include Asp-75 and Asp-118. Residues 75–76 (DS), Asp-118, and Lys-147 each bind 3-methyl-2-oxobutanoate. Glu-149 contributes to the Mg(2+) binding site. Glu-216 serves as the catalytic Proton acceptor.

This sequence belongs to the PanB family. As to quaternary structure, homodecamer; pentamer of dimers. Mg(2+) serves as cofactor.

It is found in the cytoplasm. It carries out the reaction 3-methyl-2-oxobutanoate + (6R)-5,10-methylene-5,6,7,8-tetrahydrofolate + H2O = 2-dehydropantoate + (6S)-5,6,7,8-tetrahydrofolate. Its pathway is cofactor biosynthesis; (R)-pantothenate biosynthesis; (R)-pantoate from 3-methyl-2-oxobutanoate: step 1/2. Its function is as follows. Catalyzes the reversible reaction in which hydroxymethyl group from 5,10-methylenetetrahydrofolate is transferred onto alpha-ketoisovalerate to form ketopantoate. The protein is 3-methyl-2-oxobutanoate hydroxymethyltransferase of Verminephrobacter eiseniae (strain EF01-2).